Consider the following 282-residue polypeptide: D-alanine aminotransferase (282 aa).

Tyr-32 is a substrate binding site. Arg-51 serves as a coordination point for pyridoxal 5'-phosphate. 2 residues coordinate substrate: Arg-99 and His-101. Lys-146 functions as the Proton acceptor in the catalytic mechanism. Position 146 is an N6-(pyridoxal phosphate)lysine (Lys-146). Pyridoxal 5'-phosphate is bound at residue Glu-178.

It belongs to the class-IV pyridoxal-phosphate-dependent aminotransferase family. Homodimer. The cofactor is pyridoxal 5'-phosphate.

The catalysed reaction is D-alanine + 2-oxoglutarate = D-glutamate + pyruvate. Functionally, acts on the D-isomers of alanine, leucine, aspartate, glutamate, aminobutyrate, norvaline and asparagine. The enzyme transfers an amino group from a substrate D-amino acid to the pyridoxal phosphate cofactor to form pyridoxamine and an alpha-keto acid in the first half-reaction. The second half-reaction is the reverse of the first, transferring the amino group from the pyridoxamine to a second alpha-keto acid to form the product D-amino acid via a ping-pong mechanism. This is an important process in the formation of D-alanine and D-glutamate, which are essential bacterial cell wall components. The protein is D-alanine aminotransferase (dat) of Staphylococcus haemolyticus.